Consider the following 111-residue polypeptide: Cornifelin homolog B (111 aa).

The protein belongs to the cornifelin family.

The protein is Cornifelin homolog B (cnfn-b) of Xenopus laevis (African clawed frog).